We begin with the raw amino-acid sequence, 408 residues long: Phosphopentomutase (408 aa).

Positions 10, 303, 308, 344, 345, and 356 each coordinate Mn(2+).

Belongs to the phosphopentomutase family. The cofactor is Mn(2+).

It is found in the cytoplasm. It catalyses the reaction 2-deoxy-alpha-D-ribose 1-phosphate = 2-deoxy-D-ribose 5-phosphate. It carries out the reaction alpha-D-ribose 1-phosphate = D-ribose 5-phosphate. The protein operates within carbohydrate degradation; 2-deoxy-D-ribose 1-phosphate degradation; D-glyceraldehyde 3-phosphate and acetaldehyde from 2-deoxy-alpha-D-ribose 1-phosphate: step 1/2. Isomerase that catalyzes the conversion of deoxy-ribose 1-phosphate (dRib-1-P) and ribose 1-phosphate (Rib-1-P) to deoxy-ribose 5-phosphate (dRib-5-P) and ribose 5-phosphate (Rib-5-P), respectively. The protein is Phosphopentomutase of Tolumonas auensis (strain DSM 9187 / NBRC 110442 / TA 4).